The following is a 312-amino-acid chain: Tumor necrosis factor receptor type 1-associated DEATH domain protein (312 aa).

Residues 147–163 (LRDEELAELEDALRNLK) carry the Nuclear export signal motif. Positions 170-195 (GGDGEVASAPLQPPVPSLSEVKPPPP) are disordered. The Death domain occupies 179–289 (PLQPPVPSLS…ATLQRLVEAL (111 aa)). Residues 180–195 (LQPPVPSLSEVKPPPP) show a composition bias toward pro residues. Residues 222–289 (FARSVGLKWR…ATLQRLVEAL (68 aa)) are interaction with KRT14 and KRT18. Positions 231–244 (RKVGRSLQRGCRAL) match the Nuclear localization signal motif. Residues R235 and R245 are each glycosylated ((Microbial infection) N-beta-linked (GlcNAc) arginine).

Stimulation of TNF-alpha receptor TNFRSF1A leads to the formation of two distinct signaling complexes. Plasma membrane-bound complex I is composed of TNFRSF1A, TRADD, RIPK1, TRAF2 and BIRC2/c-IAP1 or BIRC3 which interacts with CHUCK/IKK-alpha, IKBKB/IKK-beta and IKBKG/IKK-gamma promoting cell survival. Subsequently, TRADD, RIPK1 and TRAF2 dissociate from TNFRSF1A and form cytoplasmic complex II with FADD and caspase CASP8 promoting cell apoptosis. Within complex I, interacts with TNFRSF1A/TNFR1, TRAF2 and kinase RIPK1. Within complex I, interacts with TRPC4AP; the interaction promotes NF-kappa B activation. UXT1 associates with complex I; the interaction prevents the formation of complex II. Within complex I Interacts with scaffold protein DAB2IP. Interacts with autophagy receptor SQSTM1. Interacts with E3 ligase TRIP12. Interacts with kinase HIPK2. Interacts with keratin KRT14. Interacts with keratin KRT18. Interacts with keratins KRT16 and KRT17. Interacts with FADD. Interacts with TOMM70. Interacts with TMC8; the interaction impairs the formation of complex I and facilites complex II formation. (Microbial infection) Glycosylated at Arg-235 by enteropathogenic E.coli protein NleB1, C.rodentium protein NleB and S.typhimurium proteins Ssek1 and Ssek3: arginine GlcNAcylation prevents homotypic/heterotypic death domain interactions and assembly of the oligomeric TNFRSF1A/TNFR1 complex, thereby disrupting TNF signaling. Found in all examined tissues.

Its subcellular location is the nucleus. It localises to the cytoplasm. The protein localises to the cytoskeleton. Adapter molecule for TNFRSF1A/TNFR1 that specifically associates with the cytoplasmic domain of activated TNFRSF1A/TNFR1 mediating its interaction with FADD. Overexpression of TRADD leads to two major TNF-induced responses, apoptosis and activation of NF-kappa-B. The nuclear form acts as a tumor suppressor by preventing ubiquitination and degradation of isoform p19ARF/ARF of CDKN2A by TRIP12: acts by interacting with TRIP12, leading to disrupt interaction between TRIP12 and isoform p19ARF/ARF of CDKN2A. This is Tumor necrosis factor receptor type 1-associated DEATH domain protein from Homo sapiens (Human).